The following is a 269-amino-acid chain: MGLLSVDLLITLQILPWFFSNCLFLALYDSVVLLKHVILLLSCSKSSRGEWRRMLTSEGLRTVWNSFLLDAYKQVKLGGDAPNSKVVRVTSGCCRRRSFSGKGESECHLLDFASSNRPLVVNFGSATUPPFISQLPTFRKLVEEFSDVADFLLVYIDEAHPADGWAAPGVATKSFEVKKHRSQEERCVAAHKLLEHFSLPPQCQVVADCMDNNTNVAYGVSFERVCIVQRQKIAYLGGKGPFFYNLKEVRHWLEQTYRKRUVPTCELIM.

At 1–7 (MGLLSVD) the chain is on the lumenal side. A helical; Signal-anchor for type III membrane protein membrane pass occupies residues 8–28 (LLITLQILPWFFSNCLFLALY). At 29–269 (DSVVLLKHVI…RUVPTCELIM (241 aa)) the chain is on the cytoplasmic side. Selenocysteine 128 is a catalytic residue. 2 non-standard amino acids (selenocysteine) are found at residues selenocysteine 128 and selenocysteine 261.

The protein belongs to the iodothyronine deiodinase family. In terms of assembly, predominantly monomer. Can form homodimers but homodimerization is not essential for enzyme activity.

Its subcellular location is the endoplasmic reticulum membrane. The catalysed reaction is 3,3',5-triiodo-L-thyronine + iodide + A + H(+) = L-thyroxine + AH2. It carries out the reaction 3,3'-diiodo-L-thyronine + iodide + A + H(+) = 3,3',5'-triiodo-L-thyronine + AH2. The enzyme catalyses 3'-iodo-L-thyronine + iodide + A + H(+) = 3',5'-diiodo-L-thyronine + AH2. It catalyses the reaction 3,3'-diiodothyronamine + iodide + A + H(+) = 3,3',5'-triiodothyronamine + AH2. The catalysed reaction is 3'-iodothyronamine + iodide + A + H(+) = 3',5'-diiodothyronamine + AH2. Plays a crucial role in the metabolism of thyroid hormones (TH) and has specific roles in TH activation and inactivation by deiodination. Catalyzes the deiodination of L-thyroxine (T4) to 3,5,3'-triiodothyronine (T3), 3,3',5'-triiodothyronine (rT3) to 3,3'-diiodothyronine (3,3'-T2) and 3',5'-diiodothyronine (3',5'-T2) to 3'-monoiodothyronine (3'-T1) via outer-ring deiodination (ORD). Catalyzes the phenolic ring deiodinations of 3,3',5'-triiodothyronamine and 3',5'- diiodothyronamine. The chain is Type II iodothyronine deiodinase (dio2) from Neoceratodus forsteri (Australian lungfish).